A 199-amino-acid chain; its full sequence is UPF0637 protein YsbB (199 aa).

This sequence belongs to the UPF0637 family.

The polypeptide is UPF0637 protein YsbB (ysbB) (Lactococcus lactis subsp. lactis (strain IL1403) (Streptococcus lactis)).